A 169-amino-acid polypeptide reads, in one-letter code: MNNLTLSLRRERRLLVLLALVCLALLAGALYLQYVKNEDPCPLCIIQRYFFVLIAVFAFIGAGMASGAGVAVTEALIVLSAAAGVGTAARHLYVQLNPGFSCGFDALQPVVDSLPPARWLPGVFKVAGLCETVYPPIFGILLPGWALIAFVLIAVPVAVSLLRHRGRLR.

Residues 1–14 (MNNLTLSLRRERRL) are Cytoplasmic-facing. A helical membrane pass occupies residues 15 to 31 (LVLLALVCLALLAGALY). The Periplasmic segment spans residues 32-49 (LQYVKNEDPCPLCIIQRY). Cys41 and Cys44 form a disulfide bridge. The helical transmembrane segment at 50-64 (FFVLIAVFAFIGAGM) threads the bilayer. The Cytoplasmic segment spans residues 65–71 (ASGAGVA). The helical transmembrane segment at 72 to 89 (VTEALIVLSAAAGVGTAA) threads the bilayer. Over 90 to 144 (RHLYVQLNPGFSCGFDALQPVVDSLPPARWLPGVFKVAGLCETVYPPIFGILLPG) the chain is Periplasmic. A disulfide bond links Cys102 and Cys130. The chain crosses the membrane as a helical span at residues 145–163 (WALIAFVLIAVPVAVSLLR). Residues 164–169 (HRGRLR) lie on the Cytoplasmic side of the membrane.

Belongs to the DsbB family.

Its subcellular location is the cell inner membrane. Functionally, required for disulfide bond formation in some periplasmic proteins. Acts by oxidizing the DsbA protein. This chain is Disulfide bond formation protein B, found in Burkholderia mallei (strain ATCC 23344).